The following is a 322-amino-acid chain: Sideroflexin-2 (322 aa).

Met-1 bears the N-acetylmethionine mark. Transmembrane regions (helical) follow at residues 100 to 122, 142 to 164, 174 to 192, 228 to 250, and 265 to 287; these read MIIT…WQWV, SVRQ…AVGM, LVGR…CVNI, VVIS…MERL, and PLQV…GLFP.

It belongs to the sideroflexin family.

Its subcellular location is the mitochondrion inner membrane. It is found in the mitochondrion outer membrane. It carries out the reaction L-serine(in) = L-serine(out). Its function is as follows. Mitochondrial amino-acid transporter that mediates transport of serine into mitochondria. Involved in mitochondrial iron homeostasis by regulating heme biosynthesis. The polypeptide is Sideroflexin-2 (Bos taurus (Bovine)).